The sequence spans 142 residues: Small ribosomal subunit protein uS12 (142 aa).

The tract at residues Met1 to Gln44 is disordered. Over residues Ala7–His18 the composition is skewed to basic residues. Basic and acidic residues predominate over residues Arg19 to Pro38.

Belongs to the universal ribosomal protein uS12 family. Part of the 30S ribosomal subunit.

Its function is as follows. With S4 and S5 plays an important role in translational accuracy. Located at the interface of the 30S and 50S subunits. This Haloarcula marismortui (strain ATCC 43049 / DSM 3752 / JCM 8966 / VKM B-1809) (Halobacterium marismortui) protein is Small ribosomal subunit protein uS12.